The chain runs to 449 residues: Phosphoglucosamine mutase (449 aa).

Serine 100 functions as the Phosphoserine intermediate in the catalytic mechanism. Mg(2+) contacts are provided by serine 100, aspartate 240, aspartate 242, and aspartate 244. Serine 100 bears the Phosphoserine mark.

This sequence belongs to the phosphohexose mutase family. Mg(2+) is required as a cofactor. Activated by phosphorylation.

The enzyme catalyses alpha-D-glucosamine 1-phosphate = D-glucosamine 6-phosphate. Its function is as follows. Catalyzes the conversion of glucosamine-6-phosphate to glucosamine-1-phosphate. The protein is Phosphoglucosamine mutase of Clostridium novyi (strain NT).